We begin with the raw amino-acid sequence, 551 residues long: Alkaline nuclease (551 aa).

This sequence belongs to the herpesviridae alkaline nuclease family. In terms of assembly, interacts with major DNA-binding protein; this interaction increases the nuclease processivity of the alkaline exonuclease.

It is found in the host nucleus. The protein localises to the host cytoplasm. Its function is as follows. Plays a role in processing non linear or branched viral DNA intermediates in order to promote the production of mature packaged unit-length linear progeny viral DNA molecules. Exhibits endonuclease and exonuclease activities and accepts both double-stranded and single-stranded DNA as substrate. Exonuclease digestion of DNA is in the 5'-&gt; 3' direction and the products are 5'-monophosphate nucleosides. Additionally, forms a recombinase with the major DNA-binding protein, which displays strand exchange activity. In Homo sapiens (Human), this protein is Alkaline nuclease.